A 146-amino-acid polypeptide reads, in one-letter code: 3-dehydroquinate dehydratase (146 aa).

Residue Tyr22 is the Proton acceptor of the active site. 3 residues coordinate substrate: Asn74, His80, and Asp87. Residue His100 is the Proton donor of the active site. Residues Leu101–Ser102 and Arg111 each bind substrate.

Belongs to the type-II 3-dehydroquinase family. In terms of assembly, homododecamer.

It carries out the reaction 3-dehydroquinate = 3-dehydroshikimate + H2O. The protein operates within metabolic intermediate biosynthesis; chorismate biosynthesis; chorismate from D-erythrose 4-phosphate and phosphoenolpyruvate: step 3/7. Functionally, catalyzes a trans-dehydration via an enolate intermediate. This Clostridium perfringens (strain 13 / Type A) protein is 3-dehydroquinate dehydratase.